Consider the following 198-residue polypeptide: MAEKEKIKRNRREEILQALAQMLESSDGSQRITTAKLAANVGVSEAALYRHFPSKTRMFDSLIEFIEDSLITRINLILQDEKETFNRLRLILLLVLGFAERNPGLTRIMTGHALMFEQDRLQGRINQLFERIEAQLRQVLKERKLREGKGFIVDETLLASQLLAFCEGMLSRYVRSEFRYRPTQEFDGRWPLLAAQLQ.

One can recognise an HTH tetR-type domain in the interval 9 to 70; that stretch reads RNRREEILQA…SLIEFIEDSL (62 aa). A DNA-binding region (H-T-H motif) is located at residues 33-52; the sequence is TTAKLAANVGVSEAALYRHF. The stretch at 117–144 forms a coiled coil; sequence EQDRLQGRINQLFERIEAQLRQVLKERK.

It belongs to the nucleoid occlusion factor SlmA family. In terms of assembly, homodimer. Interacts with FtsZ.

It localises to the cytoplasm. Its subcellular location is the nucleoid. Required for nucleoid occlusion (NO) phenomenon, which prevents Z-ring formation and cell division over the nucleoid. Acts as a DNA-associated cell division inhibitor that binds simultaneously chromosomal DNA and FtsZ, and disrupts the assembly of FtsZ polymers. SlmA-DNA-binding sequences (SBS) are dispersed on non-Ter regions of the chromosome, preventing FtsZ polymerization at these regions. The sequence is that of Nucleoid occlusion factor SlmA from Serratia proteamaculans (strain 568).